The primary structure comprises 627 residues: Altered inheritance of mitochondria protein 9, mitochondrial (627 aa).

Residues 1 to 43 (MIRYTVAGHSRRCVVGASKRVGAIKCITVAATKRFISNKSNEV) constitute a mitochondrion transit peptide.

This sequence belongs to the AIM9 family.

The protein localises to the mitochondrion. This is Altered inheritance of mitochondria protein 9, mitochondrial (AIM9) from Saccharomyces cerevisiae (strain JAY291) (Baker's yeast).